Consider the following 442-residue polypeptide: Protein PRRC1-B (442 aa).

The disordered stretch occupies residues 1–24; that stretch reads MMEESGIETTPPSTPPPSTIGTSV.

This sequence belongs to the PRRC1 family.

It localises to the golgi apparatus. The protein is Protein PRRC1-B (prrc1-b) of Xenopus laevis (African clawed frog).